The following is a 337-amino-acid chain: Putative F-box protein At4g09870 (337 aa).

Positions 1-46 (MSISELSQDLLEEILCRVPAISLKKLRSTCKLWNSLFIDKRVRNEL) constitute an F-box domain.

The sequence is that of Putative F-box protein At4g09870 from Arabidopsis thaliana (Mouse-ear cress).